The sequence spans 177 residues: Large ribosomal subunit protein uL6 (177 aa).

This sequence belongs to the universal ribosomal protein uL6 family. Part of the 50S ribosomal subunit.

In terms of biological role, this protein binds to the 23S rRNA, and is important in its secondary structure. It is located near the subunit interface in the base of the L7/L12 stalk, and near the tRNA binding site of the peptidyltransferase center. The protein is Large ribosomal subunit protein uL6 of Azoarcus sp. (strain BH72).